Reading from the N-terminus, the 362-residue chain is sn-glycerol-3-phosphate import ATP-binding protein UgpC (362 aa).

Residues 4–235 (LSFRNVKKTY…PASTFVAGFI (232 aa)) enclose the ABC transporter domain. 37 to 44 (GPSGCGKS) provides a ligand contact to ATP.

This sequence belongs to the ABC transporter superfamily. sn-glycerol-3-phosphate importer (TC 3.A.1.1.3) family. As to quaternary structure, the complex is composed of two ATP-binding proteins (UgpC), two transmembrane proteins (UgpA and UgpE) and a solute-binding protein (UgpB).

The protein localises to the cell inner membrane. It carries out the reaction sn-glycerol 3-phosphate(out) + ATP + H2O = sn-glycerol 3-phosphate(in) + ADP + phosphate + H(+). Functionally, part of the ABC transporter complex UgpBAEC involved in sn-glycerol-3-phosphate (G3P) import. Responsible for energy coupling to the transport system. The chain is sn-glycerol-3-phosphate import ATP-binding protein UgpC from Bordetella bronchiseptica (strain ATCC BAA-588 / NCTC 13252 / RB50) (Alcaligenes bronchisepticus).